The sequence spans 358 residues: tRNA-specific 2-thiouridylase MnmA (358 aa).

ATP contacts are provided by residues 8–15 and Met35; that span reads AMSGGVDS. Positions 95 to 97 are interaction with target base in tRNA; sequence NPD. Cys100 acts as the Nucleophile in catalysis. Residues Cys100 and Cys194 are joined by a disulfide bond. Gly124 lines the ATP pocket. The segment at 144 to 146 is interaction with tRNA; the sequence is KDQ. Catalysis depends on Cys194, which acts as the Cysteine persulfide intermediate. The tract at residues 301-302 is interaction with tRNA; sequence RY.

It belongs to the MnmA/TRMU family.

The protein resides in the cytoplasm. The enzyme catalyses S-sulfanyl-L-cysteinyl-[protein] + uridine(34) in tRNA + AH2 + ATP = 2-thiouridine(34) in tRNA + L-cysteinyl-[protein] + A + AMP + diphosphate + H(+). Its function is as follows. Catalyzes the 2-thiolation of uridine at the wobble position (U34) of tRNA, leading to the formation of s(2)U34. The sequence is that of tRNA-specific 2-thiouridylase MnmA from Chlamydia trachomatis serovar L2 (strain ATCC VR-902B / DSM 19102 / 434/Bu).